The sequence spans 227 residues: Cytochrome c oxidase subunit 2 (227 aa).

The Mitochondrial intermembrane segment spans residues 1 to 14 (MAHRAQVGLQDATS). A helical membrane pass occupies residues 15 to 45 (PIMEELVIFHDHALMIIFLICFLVLYALFLT). The Mitochondrial matrix segment spans residues 46–59 (LTTKLTNTNISDAQ). A helical transmembrane segment spans residues 60–87 (EMETIWTTLPAIILILIALPSLRILYLT). The Mitochondrial intermembrane portion of the chain corresponds to 88–227 (DEINDPSFTI…IFEMGPVFAL (140 aa)). Cu cation is bound by residues histidine 161, cysteine 196, glutamate 198, cysteine 200, histidine 204, and methionine 207. Glutamate 198 provides a ligand contact to Mg(2+).

This sequence belongs to the cytochrome c oxidase subunit 2 family. As to quaternary structure, component of the cytochrome c oxidase (complex IV, CIV), a multisubunit enzyme composed of 14 subunits. The complex is composed of a catalytic core of 3 subunits MT-CO1, MT-CO2 and MT-CO3, encoded in the mitochondrial DNA, and 11 supernumerary subunits COX4I, COX5A, COX5B, COX6A, COX6B, COX6C, COX7A, COX7B, COX7C, COX8 and NDUFA4, which are encoded in the nuclear genome. The complex exists as a monomer or a dimer and forms supercomplexes (SCs) in the inner mitochondrial membrane with NADH-ubiquinone oxidoreductase (complex I, CI) and ubiquinol-cytochrome c oxidoreductase (cytochrome b-c1 complex, complex III, CIII), resulting in different assemblies (supercomplex SCI(1)III(2)IV(1) and megacomplex MCI(2)III(2)IV(2)). Found in a complex with TMEM177, COA6, COX18, COX20, SCO1 and SCO2. Interacts with TMEM177 in a COX20-dependent manner. Interacts with COX20. Interacts with COX16. Requires Cu cation as cofactor.

It is found in the mitochondrion inner membrane. The catalysed reaction is 4 Fe(II)-[cytochrome c] + O2 + 8 H(+)(in) = 4 Fe(III)-[cytochrome c] + 2 H2O + 4 H(+)(out). In terms of biological role, component of the cytochrome c oxidase, the last enzyme in the mitochondrial electron transport chain which drives oxidative phosphorylation. The respiratory chain contains 3 multisubunit complexes succinate dehydrogenase (complex II, CII), ubiquinol-cytochrome c oxidoreductase (cytochrome b-c1 complex, complex III, CIII) and cytochrome c oxidase (complex IV, CIV), that cooperate to transfer electrons derived from NADH and succinate to molecular oxygen, creating an electrochemical gradient over the inner membrane that drives transmembrane transport and the ATP synthase. Cytochrome c oxidase is the component of the respiratory chain that catalyzes the reduction of oxygen to water. Electrons originating from reduced cytochrome c in the intermembrane space (IMS) are transferred via the dinuclear copper A center (CU(A)) of subunit 2 and heme A of subunit 1 to the active site in subunit 1, a binuclear center (BNC) formed by heme A3 and copper B (CU(B)). The BNC reduces molecular oxygen to 2 water molecules using 4 electrons from cytochrome c in the IMS and 4 protons from the mitochondrial matrix. In Pongo pygmaeus (Bornean orangutan), this protein is Cytochrome c oxidase subunit 2 (MT-CO2).